The primary structure comprises 259 residues: (3R)-3-hydroxyacyl-CoA dehydrogenase (259 aa).

Residues 13 to 21 (LVTGAGSGI) and 40 to 41 (DL) each bind NAD(+). At serine 58 the chain carries Phosphoserine. 72-74 (ADV) is a binding site for NAD(+). Serine 154 serves as a coordination point for substrate. Position 158 is an N6-succinyllysine (lysine 158). The Proton acceptor role is filled by tyrosine 167. NAD(+) is bound by residues 167-171 (YAASK) and 200-202 (ITT). Residue lysine 171 is modified to N6-succinyllysine.

This sequence belongs to the short-chain dehydrogenases/reductases (SDR) family. Heterotetramer with CBR4; contains two molecules of HSD17B8 and CBR4.

It localises to the mitochondrion matrix. The enzyme catalyses a (3R)-3-hydroxyacyl-CoA + NAD(+) = a 3-oxoacyl-CoA + NADH + H(+). It carries out the reaction 17beta-estradiol + NAD(+) = estrone + NADH + H(+). The catalysed reaction is testosterone + NAD(+) = androst-4-ene-3,17-dione + NADH + H(+). It catalyses the reaction 17beta-hydroxy-5alpha-androstan-3-one + NAD(+) = 5alpha-androstan-3,17-dione + NADH + H(+). The protein operates within steroid biosynthesis; estrogen biosynthesis. It participates in lipid metabolism; fatty acid biosynthesis. It functions in the pathway lipid metabolism; mitochondrial fatty acid beta-oxidation. Functionally, required for the solubility and assembly of the heterotetramer 3-ketoacyl-[acyl carrier protein] (ACP) reductase functional complex (KAR or KAR1) that forms part of the mitochondrial fatty acid synthase (mtFAS). Alpha-subunit of the KAR complex that acts as scaffold protein required for the stability of carbonyl reductase type-4 (CBR4, beta-subunit of the KAR complex) and for its 3-ketoacyl-ACP reductase activity, thereby participating in mitochondrial fatty acid biosynthesis. Catalyzes the NAD-dependent conversion of (3R)-3-hydroxyacyl-CoA into 3-ketoacyl-CoA (3-oxoacyl-CoA) with no chain length preference; this enzymatic activity is not needed for the KAR function. Prefers (3R)-3-hydroxyacyl-CoA over (3S)-3-hydroxyacyl-CoA and displays enzymatic activity only in the presence of NAD(+). Cooperates with enoyl-CoA hydratase 1 in mitochondria, together they constitute an alternative route to the auxiliary enzyme pathways for the breakdown of Z-PUFA (cis polyunsaturated fatty acid) enoyl-esters. NAD-dependent 17-beta-hydroxysteroid dehydrogenase with highest activity towards estradiol (17beta-estradiol or E2). Has very low activity towards testosterone and dihydrotestosterone (17beta-hydroxy-5alpha-androstan-3-one). Primarily an oxidative enzyme, it can switch to a reductive mode determined in the appropriate physiologic milieu and catalyze the reduction of estrone (E1) to form biologically active 17beta-estradiol. This Canis lupus familiaris (Dog) protein is (3R)-3-hydroxyacyl-CoA dehydrogenase (HSD17B8).